A 321-amino-acid chain; its full sequence is Collectin-43 (321 aa).

An N-terminal signal peptide occupies residues 1–20; the sequence is MLPLPLSILLLLTQSQSFLG. The interval 43 to 163 is disordered; that stretch reads PADSLRGHDG…GEKGARGETS (121 aa). The segment covering 47–65 has biased composition (basic and acidic residues); the sequence is LRGHDGRDGKEGPQGEKGD. Positions 49–162 constitute a Collagen-like domain; that stretch reads GHDGRDGKEG…PGEKGARGET (114 aa). Gly residues-rich tracts occupy residues 100–109 and 124–133; these read GPEGGVGAPG and GTPGPGGAIG. Residues 147–159 are compositionally biased toward basic and acidic residues; the sequence is KGDRGDPGEKGAR. The C-type lectin domain maps to 222-321; it reads QLCREAKGQL…REERLVICEF (100 aa). 2 cysteine pairs are disulfide-bonded: C224/C319 and C297/C311.

It belongs to the SFTPD family. Oligomeric complex of 4 set of homotrimers. Post-translationally, hydroxylated. In terms of tissue distribution, liver specific.

It localises to the secreted. Lectin that binds to various sugars: mannose = ManNAc &gt; fucose &gt; GlcNAc &gt; glucose = maltose &gt; galactose &gt; lactose &gt; GalNAc. Could play a role in immune defense. The polypeptide is Collectin-43 (CL43) (Bos taurus (Bovine)).